Here is a 553-residue protein sequence, read N- to C-terminus: MKYTRYALLFSLFYALYYLIPLELRALWQPDEVRYAEISREMLVNGNWVVPHFLDLRYFEKPIAGYWINNIGQWLFGSNNFAVRIGSVFSITLSALLVYWLALRLWQQRSTALLSAVVFLTCLLVYGVGSYAVLDPMVTLWLVAAMCSFWLAAQSASRLQKVSGWLLLGLACGMGLMTKGFLALAVPVVAIVPWMIWQRRFKELLLFGPLALVSAALITAPWAISIARQEPDFWHYFFWVEHIQRFAQSDAQHKAPFWYYLPMLLAGALPWVGLLPGALQRAWRERSENSGSLYLLCWTVMPLLFFSLAKGKLPTYILPCFAPLAILLAHHGIKIAGTGSKALKANALINVAFGVIAALAVILVLAPWGLVHHPLYAKSEISKVLLGASAFLFWAAVGLACLVAGAKHWRLAALCPLGLALLAGAVIPDKVIDSKQPQSFISAVDNTLKHSRFVLANEVGLASTLAWELKRSDIQLFDRHGELEYGLSYPDAKGRFINLNDFSRWLSEHRREGSVSLVMKLSDDDQYIDERIPVPDQKYHRGRLVLWYYSQQP.

Transmembrane regions (helical) follow at residues leucine 8–tryptophan 28, phenylalanine 81–leucine 101, leucine 113–valine 133, proline 136–alanine 156, leucine 176–isoleucine 196, leucine 204–isoleucine 224, alanine 255–leucine 275, asparagine 289–alanine 309, leucine 313–isoleucine 333, valine 351–valine 371, valine 384–alanine 404, and alanine 412–isoleucine 432.

The protein belongs to the glycosyltransferase 83 family.

The protein resides in the cell inner membrane. It carries out the reaction 4-amino-4-deoxy-alpha-L-arabinopyranosyl di-trans,octa-cis-undecaprenyl phosphate + lipid IVA = lipid IIA + di-trans,octa-cis-undecaprenyl phosphate.. It functions in the pathway lipopolysaccharide metabolism; 4-amino-4-deoxy-beta-L-arabinose-lipid A biosynthesis. Its function is as follows. Catalyzes the transfer of the L-Ara4N moiety of the glycolipid undecaprenyl phosphate-alpha-L-Ara4N to lipid A. The modified arabinose is attached to lipid A and is required for resistance to polymyxin and cationic antimicrobial peptides. In Erwinia tasmaniensis (strain DSM 17950 / CFBP 7177 / CIP 109463 / NCPPB 4357 / Et1/99), this protein is Undecaprenyl phosphate-alpha-4-amino-4-deoxy-L-arabinose arabinosyl transferase.